The sequence spans 847 residues: Leucine--tRNA ligase (847 aa).

Residues 41 to 51 (PYPSGRIHMGH) carry the 'HIGH' region motif. The 'KMSKS' region signature appears at 619–623 (KMSKS). K622 is a binding site for ATP.

The protein belongs to the class-I aminoacyl-tRNA synthetase family.

It localises to the cytoplasm. It catalyses the reaction tRNA(Leu) + L-leucine + ATP = L-leucyl-tRNA(Leu) + AMP + diphosphate. The protein is Leucine--tRNA ligase of Cereibacter sphaeroides (strain ATCC 17029 / ATH 2.4.9) (Rhodobacter sphaeroides).